A 224-amino-acid polypeptide reads, in one-letter code: ATP synthase subunit a (224 aa).

The next 6 helical transmembrane spans lie at 17 to 37, 72 to 92, 99 to 119, 125 to 145, 170 to 190, and 195 to 215; these read LSLN…IYWL, IFIS…FPYI, LTLT…YGWI, MFAH…MVCI, LLLT…VTFL, and IALL…FAVL.

The protein belongs to the ATPase A chain family. F-type ATPases have 2 components, CF(1) - the catalytic core - and CF(0) - the membrane proton channel. CF(1) has five subunits: alpha(3), beta(3), gamma(1), delta(1), epsilon(1). CF(0) has three main subunits: a, b and c.

The protein localises to the mitochondrion inner membrane. Its function is as follows. Mitochondrial membrane ATP synthase (F(1)F(0) ATP synthase or Complex V) produces ATP from ADP in the presence of a proton gradient across the membrane which is generated by electron transport complexes of the respiratory chain. F-type ATPases consist of two structural domains, F(1) - containing the extramembraneous catalytic core and F(0) - containing the membrane proton channel, linked together by a central stalk and a peripheral stalk. During catalysis, ATP synthesis in the catalytic domain of F(1) is coupled via a rotary mechanism of the central stalk subunits to proton translocation. Key component of the proton channel; it may play a direct role in the translocation of protons across the membrane. The protein is ATP synthase subunit a (mt:ATPase6) of Drosophila mauritiana (Fruit fly).